The following is a 736-amino-acid chain: Protein kinase C epsilon type (736 aa).

Residues 1-117 (MVVFNGLLKI…NGSRHFEDWI (117 aa)) form the C2 domain. Ser-62 is subject to Phosphoserine. The Phorbol-ester/DAG-type 1 zinc-finger motif lies at 169 to 220 (GHKFMATYLRQPTYCSHCRDFIWGVIGKQGYQCQVCTCVVHKRCHELIITKV). Phosphothreonine is present on Thr-228. Ser-234 is modified (phosphoserine). The Phorbol-ester/DAG-type 2 zinc-finger motif lies at 242–292 (PHKFGIHNYKVPTFCDHCGSLLWGLLRQGLQCKVCKMNVHRRCETNVAPNC). Residue Thr-309 is modified to Phosphothreonine. The tract at residues 310–356 (PDKITNSGQRRKKLIGGAESPQPTSGSSPSEEDRSKSAPTSPCDQEL) is disordered. Phosphoserine is present on residues Ser-316, Ser-329, and Ser-337. Phosphoserine; by GSK3-beta is present on Ser-346. Thr-349 bears the Phosphothreonine mark. Ser-350 is modified (phosphoserine; by MAPK11 and MAPK14). Residue Ser-368 is modified to Phosphoserine; by autocatalysis. The interval 369 to 397 (FDNRGEEHRAASSTDGQLGSPENGEVRQG) is disordered. Residue Ser-388 is modified to Phosphoserine. One can recognise a Protein kinase domain in the interval 407–667 (FNFIKVLGKG…EDAIKQHPFF (261 aa)). Residues 413-421 (LGKGSFGKV) and Lys-436 contribute to the ATP site. Asp-531 functions as the Proton acceptor in the catalytic mechanism. Thr-565 is subject to Phosphothreonine; by PDPK1. In terms of domain architecture, AGC-kinase C-terminal spans 668 to 736 (KEIDWVLLEQ…FSYFGEDLMP (69 aa)). Thr-702 carries the post-translational modification Phosphothreonine. Thr-709 is subject to Phosphothreonine; by autocatalysis. Ser-728 carries the post-translational modification Phosphoserine; by autocatalysis.

It belongs to the protein kinase superfamily. AGC Ser/Thr protein kinase family. PKC subfamily. As to quaternary structure, forms a ternary complex with TRIM63 and RACK1/GN2BL1. Can form a complex with PDLIM5 and N-type calcium channel. Interacts with COPB1. Interacts with DGKQ. Interacts with STAT3. Interacts with YWHAB. Interacts with HSP90AB1; promotes functional activation in a heat shock-dependent manner. Interacts (via phorbol-ester/DAG-type 2 domain) with PRPH and VIM. Interacts with NLRP5/MATER. In terms of processing, phosphorylation on Thr-565 by PDPK1 triggers autophosphorylation on Ser-728. Phosphorylation in the hinge domain at Ser-350 by MAPK11 or MAPK14, Ser-346 by GSK3B and Ser-368 by autophosphorylation is required for interaction with YWHAB. In response to growth factors, phosphorylated at Thr-702 and Ser-728 by the mTORC2 complex, promoting autophosphorylation and activation of PRKCE.

The protein resides in the cytoplasm. It localises to the cytoskeleton. The protein localises to the cell membrane. Its subcellular location is the perinuclear region. It is found in the nucleus. The catalysed reaction is L-seryl-[protein] + ATP = O-phospho-L-seryl-[protein] + ADP + H(+). It catalyses the reaction L-threonyl-[protein] + ATP = O-phospho-L-threonyl-[protein] + ADP + H(+). Novel PKCs (PRKCD, PRKCE, PRKCH and PRKCQ) are calcium-insensitive, but activated by diacylglycerol (DAG) and phosphatidylserine. Three specific sites; Thr-565 (activation loop of the kinase domain), Thr-709 (turn motif) and Ser-728 (hydrophobic region), need to be phosphorylated for its full activation. In terms of biological role, calcium-independent, phospholipid- and diacylglycerol (DAG)-dependent serine/threonine-protein kinase that plays essential roles in the regulation of multiple cellular processes linked to cytoskeletal proteins, such as cell adhesion, motility, migration and cell cycle, functions in neuron growth and ion channel regulation, and is involved in immune response, cancer cell invasion and regulation of apoptosis. Mediates cell adhesion to the extracellular matrix via integrin-dependent signaling, by mediating angiotensin-2-induced activation of integrin beta-1 (ITGB1) in cardiac fibroblasts. Phosphorylates MARCKS, which phosphorylates and activates PTK2/FAK, leading to the spread of cardiomyocytes. Involved in the control of the directional transport of ITGB1 in mesenchymal cells by phosphorylating vimentin (VIM), an intermediate filament (IF) protein. In epithelial cells, associates with and phosphorylates keratin-8 (KRT8), which induces targeting of desmoplakin at desmosomes and regulates cell-cell contact. Phosphorylates IQGAP1, which binds to CDC42, mediating epithelial cell-cell detachment prior to migration. During cytokinesis, forms a complex with YWHAB, which is crucial for daughter cell separation, and facilitates abscission by a mechanism which may implicate the regulation of RHOA. In cardiac myocytes, regulates myofilament function and excitation coupling at the Z-lines, where it is indirectly associated with F-actin via interaction with COPB1. During endothelin-induced cardiomyocyte hypertrophy, mediates activation of PTK2/FAK, which is critical for cardiomyocyte survival and regulation of sarcomere length. Plays a role in the pathogenesis of dilated cardiomyopathy via persistent phosphorylation of troponin I (TNNI3). Involved in nerve growth factor (NFG)-induced neurite outgrowth and neuron morphological change independently of its kinase activity, by inhibition of RHOA pathway, activation of CDC42 and cytoskeletal rearrangement. May be involved in presynaptic facilitation by mediating phorbol ester-induced synaptic potentiation. Phosphorylates gamma-aminobutyric acid receptor subunit gamma-2 (GABRG2), which reduces the response of GABA receptors to ethanol and benzodiazepines and may mediate acute tolerance to the intoxicating effects of ethanol. Upon PMA treatment, phosphorylates the capsaicin- and heat-activated cation channel TRPV1, which is required for bradykinin-induced sensitization of the heat response in nociceptive neurons. Is able to form a complex with PDLIM5 and N-type calcium channel, and may enhance channel activities and potentiates fast synaptic transmission by phosphorylating the pore-forming alpha subunit CACNA1B (CaV2.2). Downstream of TLR4, plays an important role in the lipopolysaccharide (LPS)-induced immune response by phosphorylating and activating TICAM2/TRAM, which in turn activates the transcription factor IRF3 and subsequent cytokines production. In differentiating erythroid progenitors, is regulated by EPO and controls the protection against the TNFSF10/TRAIL-mediated apoptosis, via BCL2. May be involved in the regulation of the insulin-induced phosphorylation and activation of AKT1. Phosphorylates NLRP5/MATER and may thereby modulate AKT pathway activation in cumulus cells. Phosphorylates and activates LRRK1, which phosphorylates RAB proteins involved in intracellular trafficking. In Oryctolagus cuniculus (Rabbit), this protein is Protein kinase C epsilon type (PRKCE).